A 305-amino-acid polypeptide reads, in one-letter code: Glyceraldehyde-3-phosphate dehydrogenase 2, cytosolic (305 aa).

Positions 3 and 50 each coordinate NAD(+). D-glyceraldehyde 3-phosphate is bound by residues 121-123, Thr-152, 181-182, and Arg-204; these read SCT and TG. Residue Cys-122 is the Nucleophile of the active site. Residue Asn-286 coordinates NAD(+).

The protein belongs to the glyceraldehyde-3-phosphate dehydrogenase family. Homotetramer.

It localises to the cytoplasm. The enzyme catalyses D-glyceraldehyde 3-phosphate + phosphate + NAD(+) = (2R)-3-phospho-glyceroyl phosphate + NADH + H(+). Its pathway is carbohydrate degradation; glycolysis; pyruvate from D-glyceraldehyde 3-phosphate: step 1/5. Functionally, key enzyme in glycolysis that catalyzes the first step of the pathway by converting D-glyceraldehyde 3-phosphate (G3P) into 3-phospho-D-glyceroyl phosphate. Essential for the maintenance of cellular ATP levels and carbohydrate metabolism. The protein is Glyceraldehyde-3-phosphate dehydrogenase 2, cytosolic (GAPC) of Hordeum vulgare (Barley).